Here is a 123-residue protein sequence, read N- to C-terminus: Defensin beta 118 (123 aa).

Positions 1 to 19 (MKLLLLALPVLVLLPQVIP) are cleaved as a signal peptide. 3 cysteine pairs are disulfide-bonded: C27–C54, C34–C48, and C38–C55. Residues 65–123 (VPMTSPTPLSDSTPGIIDDILTVRFTTDYFEVSSKKDMVEESEAGRGTETSLPNVHHSS) constitute a propeptide that is removed on maturation. The segment covering 100–110 (KDMVEESEAGR) has biased composition (basic and acidic residues). Residues 100–123 (KDMVEESEAGRGTETSLPNVHHSS) are disordered. Positions 112–123 (TETSLPNVHHSS) are enriched in polar residues.

The protein belongs to the beta-defensin family. In terms of processing, the three-dimensional structure formed by the three intramolecular disulfide bridges is indispensable for antimicrobial activity.

It is found in the secreted. Functionally, host defense peptide that exhibits antimicrobial activity against both Gram-negative bacteria, such as E.coli and S.typhimurium, and Gram-positive bacteria, such as S.aureus and B.subtilis. Inhibits cell adhesion of E.coli on intestinal epithelial enterocytes. Causes rapid permeabilization of both the outer and inner membrane of E.coli, leading to morphological alterations on the bacterial surface. Binds to bacterial lipopolysaccharides (LPS) with high affinity, and may thereby be involved in immunoregulation through LPS neutralization. May contribute to epididymal innate immunity and protect the sperm against attack by microorganisms. The sequence is that of Defensin beta 118 (DEFB118) from Pan troglodytes (Chimpanzee).